Reading from the N-terminus, the 424-residue chain is Serine hydroxymethyltransferase (424 aa).

(6S)-5,6,7,8-tetrahydrofolate-binding positions include Leu118 and 122–124 (GHL). Lys227 bears the N6-(pyridoxal phosphate)lysine mark. 351 to 353 (SPF) is a (6S)-5,6,7,8-tetrahydrofolate binding site.

It belongs to the SHMT family. In terms of assembly, homodimer. Requires pyridoxal 5'-phosphate as cofactor.

The protein resides in the cytoplasm. It carries out the reaction (6R)-5,10-methylene-5,6,7,8-tetrahydrofolate + glycine + H2O = (6S)-5,6,7,8-tetrahydrofolate + L-serine. Its pathway is one-carbon metabolism; tetrahydrofolate interconversion. It functions in the pathway amino-acid biosynthesis; glycine biosynthesis; glycine from L-serine: step 1/1. Functionally, catalyzes the reversible interconversion of serine and glycine with tetrahydrofolate (THF) serving as the one-carbon carrier. This reaction serves as the major source of one-carbon groups required for the biosynthesis of purines, thymidylate, methionine, and other important biomolecules. Also exhibits THF-independent aldolase activity toward beta-hydroxyamino acids, producing glycine and aldehydes, via a retro-aldol mechanism. This is Serine hydroxymethyltransferase from Thermosipho melanesiensis (strain DSM 12029 / CIP 104789 / BI429).